An 837-amino-acid chain; its full sequence is Putative outer membrane protein assembly factor TP_0326 (837 aa).

An N-terminal signal peptide occupies residues 1–21 (MLKKASAFLIASCCVMSLAWA). Residues 22–433 (QANDNWYEGK…ILNVEEQSTA (412 aa)) lie on the Periplasmic side of the membrane. 5 POTRA domains span residues 31–105 (KPIS…VKER), 106–182 (PSVK…IQEG), 185–273 (TVVS…VVEG), 276–354 (YRYG…VVER), and 357–430 (SHVE…VEEQ). Residues 434–442 (NVQFGVTFS) traverse the membrane as a beta stranded segment. The Extracellular; loop L1 segment spans residues 443–450 (GVGEAGTF). Residues 451–461 (PLSLFCQWEEK) form a beta stranded membrane-spanning segment. Over 462–468 (NFLGKGN) the chain is Periplasmic. A beta stranded membrane pass occupies residues 469–476 (EISVNATL). Residues 477-478 (GS) lie on the Extracellular; loop L2 side of the membrane. A beta stranded transmembrane segment spans residues 479–489 (EAQSLKLGYVE). Residues 490–499 (RWFLGSPLTV) lie on the Periplasmic side of the membrane. Residues 500 to 520 (GFDFELTHKNLFVYRAGSYGN) traverse the membrane as a beta stranded segment. The Extracellular; loop L3 portion of the chain corresponds to 521–530 (GLPHPYTSRE). The beta stranded transmembrane segment at 531–543 (QWASSPGLAESFR) threads the bilayer. Residues 544–554 (LKYSRFESAIG) are Periplasmic-facing. Residues 555–568 (AHTGYQWYPRYAVI) traverse the membrane as a beta stranded segment. Over 569–601 (RVNGGVDFRVVKNFYDKDNNQPFDLTVKEQLNW) the chain is Extracellular; loop L4. The beta stranded transmembrane segment at 602–615 (TSINSFWTSVSFDG) threads the bilayer. The Periplasmic portion of the chain corresponds to 616 to 623 (RDFAYDPS). A beta stranded membrane pass occupies residues 624 to 636 (SGWFLGQRCTFNG). Over 637–644 (LVPFLEKE) the chain is Extracellular; loop L5. A beta stranded transmembrane segment spans residues 645-658 (HSFRSDTKAEFYVT). The Periplasmic portion of the chain corresponds to 659 to 667 (LLNYPVSAV). The beta stranded transmembrane segment at 668 to 682 (WNLKFVLAFYTGVSV) threads the bilayer. Over 683–724 (QTYYGRRKSENGKGNGVRSGALVIDGVLVGRGWSEDAKKNTG) the chain is Extracellular; loop L6. The chain crosses the membrane as a beta stranded span at residues 725–736 (DLLLHHWIEFRW). At 737–741 (PLAHG) the chain is on the periplasmic side. Residues 742–756 (IVSFDFFFDAAMVYN) form a beta stranded membrane-spanning segment. Residues 757–786 (IESQSPNGSSSASSSSSSSSSSSRTTSSEG) are Extracellular; loop L7-facing. The interval 761–785 (SPNGSSSASSSSSSSSSSSRTTSSE) is disordered. The segment covering 765 to 784 (SSSASSSSSSSSSSSRTTSS) has biased composition (low complexity). A beta stranded membrane pass occupies residues 787–799 (LYKMSYGPGLRFT). Over 800-802 (LPQ) the chain is Periplasmic. Residues 803-814 (FPLKLAFANTFT) form a beta stranded membrane-spanning segment. The Extracellular; loop L8 segment spans residues 815 to 824 (SPGGIPKTKK). The beta stranded transmembrane segment at 825-829 (NWNFV) threads the bilayer. Residues 830 to 837 (LSFTVNNL) lie on the Periplasmic side of the membrane.

The protein belongs to the BamA family. Part of 2 complexes of about 239 and 164 kDa.

Its subcellular location is the cell outer membrane. Its function is as follows. Might be part of the outer membrane protein assembly complex, which is involved in assembly and insertion of beta-barrel proteins into the outer membrane. In terms of biological role, both rabbit immune serum and rabbit antiserum specific for extracytoplasmic loop L4 promote bacteria internalization by rabbit peritoneal macrophages. Pools of human syphilitic sera from the USA and Columbia recognize both the N-terminal POTRA-containing and C-terminal beta-barrel domains as well as loop L4, showing this protein stimulates the immune system in both humans and rabbits. The polypeptide is Putative outer membrane protein assembly factor TP_0326 (tp92) (Treponema pallidum (strain Nichols)).